The sequence spans 444 residues: 23S rRNA (uracil(1939)-C(5))-methyltransferase RlmD (444 aa).

Residues 5-67 (RSRIDRTPFQ…RHFDEARTVE (63 aa)) form the TRAM domain. The [4Fe-4S] cluster site is built by Cys80, Cys86, Cys89, and Cys168. S-adenosyl-L-methionine contacts are provided by Gln276, Phe305, Asn310, Glu326, Asp353, and Asp374. Catalysis depends on Cys400, which acts as the Nucleophile.

Belongs to the class I-like SAM-binding methyltransferase superfamily. RNA M5U methyltransferase family. RlmD subfamily.

The enzyme catalyses uridine(1939) in 23S rRNA + S-adenosyl-L-methionine = 5-methyluridine(1939) in 23S rRNA + S-adenosyl-L-homocysteine + H(+). Catalyzes the formation of 5-methyl-uridine at position 1939 (m5U1939) in 23S rRNA. The chain is 23S rRNA (uracil(1939)-C(5))-methyltransferase RlmD from Stenotrophomonas maltophilia (strain R551-3).